Here is a 214-residue protein sequence, read N- to C-terminus: Urease accessory protein UreF (214 aa).

It belongs to the UreF family. In terms of assembly, ureD, UreF and UreG form a complex that acts as a GTP-hydrolysis-dependent molecular chaperone, activating the urease apoprotein by helping to assemble the nickel containing metallocenter of UreC. The UreE protein probably delivers the nickel.

The protein localises to the cytoplasm. In terms of biological role, required for maturation of urease via the functional incorporation of the urease nickel metallocenter. In Ruegeria sp. (strain TM1040) (Silicibacter sp.), this protein is Urease accessory protein UreF.